The following is a 452-amino-acid chain: Pup--protein ligase (452 aa).

A Mg(2+)-binding site is contributed by Glu9. Residue Arg53 coordinates ATP. Position 55 (Tyr55) interacts with Mg(2+). Asp57 functions as the Proton acceptor in the catalytic mechanism. A Mg(2+)-binding site is contributed by Glu63. ATP is bound by residues Thr66 and Trp419.

It belongs to the Pup ligase/Pup deamidase family. Pup-conjugating enzyme subfamily.

The catalysed reaction is ATP + [prokaryotic ubiquitin-like protein]-L-glutamate + [protein]-L-lysine = ADP + phosphate + N(6)-([prokaryotic ubiquitin-like protein]-gamma-L-glutamyl)-[protein]-L-lysine.. It functions in the pathway protein degradation; proteasomal Pup-dependent pathway. The protein operates within protein modification; protein pupylation. Catalyzes the covalent attachment of the prokaryotic ubiquitin-like protein modifier Pup to the proteasomal substrate proteins, thereby targeting them for proteasomal degradation. This tagging system is termed pupylation. The ligation reaction involves the side-chain carboxylate of the C-terminal glutamate of Pup and the side-chain amino group of a substrate lysine. This Mycobacterium avium (strain 104) protein is Pup--protein ligase.